A 596-amino-acid chain; its full sequence is Aspartate--tRNA(Asp/Asn) ligase (596 aa).

Glutamate 175 provides a ligand contact to L-aspartate. Residues 199-202 (QQYK) form an aspartate region. 2 residues coordinate L-aspartate: arginine 221 and histidine 454. 221–223 (RDE) lines the ATP pocket. Glutamate 488 contacts ATP. Position 495 (arginine 495) interacts with L-aspartate. 540-543 (GIDR) serves as a coordination point for ATP.

The protein belongs to the class-II aminoacyl-tRNA synthetase family. Type 1 subfamily. Homodimer.

The protein resides in the cytoplasm. It catalyses the reaction tRNA(Asx) + L-aspartate + ATP = L-aspartyl-tRNA(Asx) + AMP + diphosphate. In terms of biological role, aspartyl-tRNA synthetase with relaxed tRNA specificity since it is able to aspartylate not only its cognate tRNA(Asp) but also tRNA(Asn). Reaction proceeds in two steps: L-aspartate is first activated by ATP to form Asp-AMP and then transferred to the acceptor end of tRNA(Asp/Asn). The chain is Aspartate--tRNA(Asp/Asn) ligase from Rhizobium leguminosarum bv. trifolii (strain WSM2304).